The following is a 566-amino-acid chain: Arginine--tRNA ligase (566 aa).

A 'HIGH' region motif is present at residues 120–130 (PNIAKPFHVGH).

This sequence belongs to the class-I aminoacyl-tRNA synthetase family. As to quaternary structure, monomer.

It is found in the cytoplasm. It catalyses the reaction tRNA(Arg) + L-arginine + ATP = L-arginyl-tRNA(Arg) + AMP + diphosphate. The sequence is that of Arginine--tRNA ligase from Clostridium kluyveri (strain NBRC 12016).